Consider the following 294-residue polypeptide: Ribosomal protein L11 methyltransferase (294 aa).

Residues threonine 146, glycine 167, aspartate 189, and asparagine 231 each coordinate S-adenosyl-L-methionine.

It belongs to the methyltransferase superfamily. PrmA family.

The protein resides in the cytoplasm. It carries out the reaction L-lysyl-[protein] + 3 S-adenosyl-L-methionine = N(6),N(6),N(6)-trimethyl-L-lysyl-[protein] + 3 S-adenosyl-L-homocysteine + 3 H(+). Its function is as follows. Methylates ribosomal protein L11. The protein is Ribosomal protein L11 methyltransferase of Aliivibrio fischeri (strain ATCC 700601 / ES114) (Vibrio fischeri).